The following is an 838-amino-acid chain: Probable beta-glucosidase I (838 aa).

N-linked (GlcNAc...) asparagine glycans are attached at residues N57 and N197. D225 is an active-site residue. The 161-residue stretch at 395 to 555 (EGEKGFKFRV…GQEELISKAA (161 aa)) folds into the PA14 domain. N493 carries N-linked (GlcNAc...) asparagine glycosylation.

The protein belongs to the glycosyl hydrolase 3 family.

The protein localises to the secreted. The enzyme catalyses Hydrolysis of terminal, non-reducing beta-D-glucosyl residues with release of beta-D-glucose.. It functions in the pathway glycan metabolism; cellulose degradation. Functionally, beta-glucosidases are one of a number of cellulolytic enzymes involved in the degradation of cellulosic biomass. Catalyzes the last step releasing glucose from the inhibitory cellobiose. The sequence is that of Probable beta-glucosidase I (bglI) from Aspergillus clavatus (strain ATCC 1007 / CBS 513.65 / DSM 816 / NCTC 3887 / NRRL 1 / QM 1276 / 107).